A 210-amino-acid chain; its full sequence is uncharacterized protein (210 aa).

The signal sequence occupies residues 1-20 (MRVITLSGITLFLLASLASA). Residues 21–175 (IELTFKLENQ…YSTVKSTQAR (155 aa)) lie on the Lumenal side of the membrane. Positions 32 to 115 (KQCYYLDSFH…DKIVTMEITM (84 aa)) constitute a GOLD domain. N-linked (GlcNAc...) asparagine glycosylation occurs at asparagine 165. The chain crosses the membrane as a helical span at residues 176 to 196 (IFWFSLAESIMVVALSALQVF). The Cytoplasmic portion of the chain corresponds to 197–210 (IVKTFFKRSGRRGV).

The protein belongs to the EMP24/GP25L family.

Its subcellular location is the endoplasmic reticulum membrane. This is an uncharacterized protein from Schizosaccharomyces pombe (strain 972 / ATCC 24843) (Fission yeast).